The sequence spans 307 residues: Glycerol-3-phosphate dehydrogenase [NAD(P)+] (307 aa).

W14, R34, R35, and K82 together coordinate NADPH. Residues K82 and G110 each coordinate sn-glycerol 3-phosphate. S114 serves as a coordination point for NADPH. Sn-glycerol 3-phosphate-binding residues include K165, D218, S228, R229, and N230. Catalysis depends on K165, which acts as the Proton acceptor. R229 is a binding site for NADPH. Residue E255 participates in NADPH binding.

Belongs to the NAD-dependent glycerol-3-phosphate dehydrogenase family.

Its subcellular location is the cytoplasm. It carries out the reaction sn-glycerol 3-phosphate + NAD(+) = dihydroxyacetone phosphate + NADH + H(+). The catalysed reaction is sn-glycerol 3-phosphate + NADP(+) = dihydroxyacetone phosphate + NADPH + H(+). It participates in membrane lipid metabolism; glycerophospholipid metabolism. In terms of biological role, catalyzes the reduction of the glycolytic intermediate dihydroxyacetone phosphate (DHAP) to sn-glycerol 3-phosphate (G3P), the key precursor for phospholipid synthesis. The chain is Glycerol-3-phosphate dehydrogenase [NAD(P)+] from Nostoc sp. (strain PCC 7120 / SAG 25.82 / UTEX 2576).